The following is a 77-amino-acid chain: Small ribosomal subunit protein uS17c (77 aa).

This sequence belongs to the universal ribosomal protein uS17 family. Part of the 30S ribosomal subunit.

The protein localises to the plastid. The protein resides in the chloroplast. One of the primary rRNA binding proteins, it binds specifically to the 5'-end of 16S ribosomal RNA. In Cyanidium caldarium (Red alga), this protein is Small ribosomal subunit protein uS17c (rps17).